The following is a 283-amino-acid chain: Protein/nucleic acid deglycase HchA (283 aa).

3 residues coordinate Zn(2+): histidine 86, glutamate 91, and histidine 123. The active-site Nucleophile is the cysteine 185.

The protein belongs to the peptidase C56 family. HchA subfamily. Homodimer.

It is found in the cytoplasm. It catalyses the reaction N(omega)-(1-hydroxy-2-oxopropyl)-L-arginyl-[protein] + H2O = lactate + L-arginyl-[protein] + H(+). It carries out the reaction N(6)-(1-hydroxy-2-oxopropyl)-L-lysyl-[protein] + H2O = lactate + L-lysyl-[protein] + H(+). The catalysed reaction is S-(1-hydroxy-2-oxopropyl)-L-cysteinyl-[protein] + H2O = lactate + L-cysteinyl-[protein] + H(+). The enzyme catalyses N(omega)-(1-hydroxy-2-oxoethyl)-L-arginyl-[protein] + H2O = L-arginyl-[protein] + glycolate + H(+). It catalyses the reaction N(6)-(1-hydroxy-2-oxoethyl)-L-lysyl-[protein] + H2O = glycolate + L-lysyl-[protein] + H(+). It carries out the reaction S-(1-hydroxy-2-oxoethyl)-L-cysteinyl-[protein] + H2O = glycolate + L-cysteinyl-[protein] + H(+). The catalysed reaction is N(2)-(1-hydroxy-2-oxopropyl)-dGTP + H2O = lactate + dGTP + H(+). The enzyme catalyses N(2)-(1-hydroxy-2-oxopropyl)-GTP + H2O = lactate + GTP + H(+). It catalyses the reaction N(2)-(1-hydroxy-2-oxopropyl)-GDP + H2O = lactate + GDP + H(+). It carries out the reaction N(2)-(1-hydroxy-2-oxopropyl)-GMP + H2O = lactate + GMP + H(+). The catalysed reaction is N(2)-(1-hydroxy-2-oxoethyl)-dGTP + H2O = dGTP + glycolate + H(+). The enzyme catalyses N(2)-(1-hydroxy-2-oxoethyl)-GTP + H2O = glycolate + GTP + H(+). It catalyses the reaction N(2)-(1-hydroxy-2-oxoethyl)-GDP + H2O = glycolate + GDP + H(+). It carries out the reaction N(2)-(1-hydroxy-2-oxoethyl)-GMP + H2O = glycolate + GMP + H(+). The catalysed reaction is an N(2)-(1-hydroxy-2-oxopropyl)-guanosine in RNA + H2O = a guanosine in RNA + lactate + H(+). The enzyme catalyses an N(2)-(1-hydroxy-2-oxopropyl)-2'-deoxyguanosine in DNA + H2O = a 2'-deoxyguanosine in DNA + lactate + H(+). It catalyses the reaction an N(2)-(1-hydroxy-2-oxoethyl)-guanosine in RNA + H2O = a guanosine in RNA + glycolate + H(+). It carries out the reaction an N(2)-(1-hydroxy-2-oxoethyl)-2'-deoxyguanosine in DNA + H2O = a 2'-deoxyguanosine in DNA + glycolate + H(+). Its function is as follows. Protein and nucleotide deglycase that catalyzes the deglycation of the Maillard adducts formed between amino groups of proteins or nucleotides and reactive carbonyl groups of glyoxals. Thus, functions as a protein deglycase that repairs methylglyoxal- and glyoxal-glycated proteins, and releases repaired proteins and lactate or glycolate, respectively. Deglycates cysteine, arginine and lysine residues in proteins, and thus reactivates these proteins by reversing glycation by glyoxals. Acts on early glycation intermediates (hemithioacetals and aminocarbinols), preventing the formation of Schiff bases and advanced glycation endproducts (AGE). Also functions as a nucleotide deglycase able to repair glycated guanine in the free nucleotide pool (GTP, GDP, GMP, dGTP) and in DNA and RNA. Is thus involved in a major nucleotide repair system named guanine glycation repair (GG repair), dedicated to reversing methylglyoxal and glyoxal damage via nucleotide sanitization and direct nucleic acid repair. Plays an important role in protecting cells from carbonyl stress. This is Protein/nucleic acid deglycase HchA from Escherichia coli O139:H28 (strain E24377A / ETEC).